The following is a 558-amino-acid chain: MAASEDGSSCLVSRGRSQSDPSFLSDSSATSTDAGENPDEMDQTPPARSEPLVSGIRTPPVRRNSKLATLGRIFKPWKWRKKKNEKLKQTTSALEKKMAGRQGREELIKQGLLEMMEQDSENKACSPKEGSQPVQSEPPAGEQETLTSEGAQPGSPSASGTDQVSQDELLSSDAHLDDTANIPSASTAEEADAGSLLPTTDEPSQALAGSDSLDSPPRSLERSVSQLPSPPLLPTPPPKASSKATKNVTGQAALFQGPSMKNNEPALRGQLATPTGSPHVTTVHRPLPPSRVMEELHRALATKHRQDSFQGRECRGSPKKRMDVRLSRTSSMERGKERDEAWSFDGASENKWTATKDSEENKENLMLSSELKDDMLLYQDEEALNDSIISGTLPRKCKKELLAVKLRNRPSKQELEDRNIFPRRTDEERQEIRQQIEMKLSKRLSQRPAVEELERRNILKQRNDQTEQEERREIKQRLTRKLNQRPTVDELRDRKILIRFSDYVEVARAQDYDRRADKPWTRLSAADKAAIRKELNEYKSNEMEVHASSKHLTRFHRP.

Polar residues predominate over residues 1–11; it reads MAASEDGSSCL. 3 disordered regions span residues 1–69, 81–288, and 300–366; these read MAAS…KLAT, KKKN…RPLP, and LATK…ENLM. Over residues 18-33 the composition is skewed to low complexity; that stretch reads QSDPSFLSDSSATSTD. At threonine 69 the chain carries Phosphothreonine. The RPEL 1 repeat unit spans residues 92–117; the sequence is SALEKKMAGRQGREELIKQGLLEMME. Residues 94-108 are compositionally biased toward basic and acidic residues; the sequence is LEKKMAGRQGREELI. The segment covering 144–169 has biased composition (polar residues); it reads ETLTSEGAQPGSPSASGTDQVSQDEL. The span at 228-239 shows a compositional bias: pro residues; sequence PSPPLLPTPPPK. Serine 229 is modified (phosphoserine). Threonine 235 is subject to Phosphothreonine. Composition is skewed to basic and acidic residues over residues 300–341 and 354–363; these read LATK…RDEA and ATKDSEENKE. 3 RPEL repeats span residues 400 to 425, 438 to 463, and 476 to 501; these read ELLA…PRRT, MKLS…KQRN, and QRLT…IRFS. Residues 449-485 are a coiled coil; that stretch reads AVEELERRNILKQRNDQTEQEERREIKQRLTRKLNQR.

Belongs to the phosphatase and actin regulator family. Binds PPP1CA and actin; thus inhibiting the protein phosphatase 1 (PP1) activity.

The protein resides in the nucleus matrix. The protein is Phosphatase and actin regulator 3 (Phactr3) of Mus musculus (Mouse).